The sequence spans 610 residues: Myosin light chain kinase 2, skeletal/cardiac muscle (610 aa).

2 disordered regions span residues 1 to 168 and 196 to 240; these read MATE…HSPS and VSET…DTSQ. Ala2 is subject to N-acetylalanine. Composition is skewed to basic and acidic residues over residues 32-63 and 70-82; these read SEKE…KKNP and KTPE…KKGD. Residues 94-109 are compositionally biased toward gly residues; sequence SGEGDGGGGPAEGGTG. Residues 141–157 are compositionally biased toward basic and acidic residues; sequence GEAKAGKKAAECREAGR. Phosphoserine is present on residues Ser160, Ser166, and Ser168. A Protein kinase domain is found at 299–554; it reads MNSKEALGGG…AEQCLAHPWL (256 aa). Residues 305 to 313 and Lys328 each bind ATP; that span reads LGGGKFGAV. Asp420 acts as the Proton acceptor in catalysis. The residue at position 459 (Thr459) is a Phosphothreonine. Positions 588-600 are calmodulin-binding; that stretch reads IAVSAANRFKKIS.

Belongs to the protein kinase superfamily. CAMK Ser/Thr protein kinase family. May interact with centrin.

It is found in the cytoplasm. It carries out the reaction L-seryl-[myosin light chain] + ATP = O-phospho-L-seryl-[myosin light chain] + ADP + H(+). The enzyme catalyses L-threonyl-[myosin light chain] + ATP = O-phospho-L-threonyl-[myosin light chain] + ADP + H(+). Its function is as follows. Implicated in the level of global muscle contraction and cardiac function. Phosphorylates a specific serine in the N-terminus of a myosin light chain. The sequence is that of Myosin light chain kinase 2, skeletal/cardiac muscle (Mylk2) from Rattus norvegicus (Rat).